The primary structure comprises 254 residues: Tubulin-specific chaperone B (254 aa).

The CAP-Gly domain maps to 182-225 (PLPLDVMGTWCGVEFPEAAGKNDGRINGVTLFGPVAPGHGSFVR). Positions 234–254 (KDEESAEVEDVHDDVESDDEI) are disordered. Positions 237-254 (ESAEVEDVHDDVESDDEI) are enriched in acidic residues.

The protein belongs to the TBCB family. As to quaternary structure, binds to monomeric alpha-tubulin.

It localises to the cytoplasm. It is found in the cytoskeleton. Its function is as follows. Acts to sequester alpha-tubulin from interaction with beta-tubulin, raising the possibility that it plays a regulatory role in the formation of the tubulin heterodimer. This Saccharomyces cerevisiae (strain ATCC 204508 / S288c) (Baker's yeast) protein is Tubulin-specific chaperone B (ALF1).